We begin with the raw amino-acid sequence, 279 residues long: uncharacterized protein (279 aa).

The tract at residues 1-28 (MGLFGGGNSKSTSNQTTNNENTNIATQG) is disordered. Residues 9–23 (SKSTSNQTTNNENTN) are compositionally biased toward low complexity. Residues 256–273 (KTLMIGIVAVSAAVGLYA) traverse the membrane as a helical segment.

Its subcellular location is the host membrane. This is an uncharacterized protein from Pseudoalteromonas espejiana (Bacteriophage PM2).